Here is a 191-residue protein sequence, read N- to C-terminus: Adenylate kinase (191 aa).

Residue 12–17 (GSGKTT) participates in ATP binding. The interval 33–62 (STGDLLRAEVASGSELGKLIDSFISKGNLV) is NMP. Residues Thr34, Arg39, 60–62 (NLV), 87–90 (GYPR), and Gln94 each bind AMP. The segment at 129-135 (GRARGAD) is LID. Arg130 serves as a coordination point for ATP. Residues Arg132 and Arg144 each contribute to the AMP site. Arg172 is an ATP binding site.

It belongs to the adenylate kinase family. Monomer.

The protein resides in the cytoplasm. It catalyses the reaction AMP + ATP = 2 ADP. The protein operates within purine metabolism; AMP biosynthesis via salvage pathway; AMP from ADP: step 1/1. Catalyzes the reversible transfer of the terminal phosphate group between ATP and AMP. Plays an important role in cellular energy homeostasis and in adenine nucleotide metabolism. In Campylobacter fetus subsp. fetus (strain 82-40), this protein is Adenylate kinase.